The chain runs to 156 residues: MAREVKLTKAGYERLMQQLERERERLQEATKILQELMESSDDYDDSGLEAAKQEKARIEARIDSLEDILSRAVILEEGSGEVIGLGSVVELEDPLSGERLSVQVVSPAEANVLDTPMKISDASPMGKALLGHRVGDVLSLDTPKGRREFRVVAIHG.

Positions 1-74 (MAREVKLTKA…LEDILSRAVI (74 aa)) form a coiled coil. The Zn(2+) site is built by glutamate 20 and glutamate 24.

This sequence belongs to the GreA/GreB family. Interacts with RNAP.

Inhibits all catalytic activities of RNA polymerase (RNAP) by partially occluding its substrate-binding site and preventing NTP binding. The protein is Transcription inhibitor protein Gfh1 (gfh1) of Thermus thermophilus (strain ATCC 27634 / DSM 579 / HB8).